A 526-amino-acid polypeptide reads, in one-letter code: ATP synthase subunit alpha (526 aa).

171–178 contributes to the ATP binding site; that stretch reads GDRQTGKT.

The protein belongs to the ATPase alpha/beta chains family. F-type ATPases have 2 components, CF(1) - the catalytic core - and CF(0) - the membrane proton channel. CF(1) has five subunits: alpha(3), beta(3), gamma(1), delta(1), epsilon(1). CF(0) has four main subunits: a, b, b' and c.

It is found in the cell inner membrane. It carries out the reaction ATP + H2O + 4 H(+)(in) = ADP + phosphate + 5 H(+)(out). Functionally, produces ATP from ADP in the presence of a proton gradient across the membrane. The alpha chain is a regulatory subunit. In Chlorobium limicola (strain DSM 245 / NBRC 103803 / 6330), this protein is ATP synthase subunit alpha.